Here is a 185-residue protein sequence, read N- to C-terminus: Ribosome-recycling factor (185 aa).

This sequence belongs to the RRF family.

It localises to the cytoplasm. Its function is as follows. Responsible for the release of ribosomes from messenger RNA at the termination of protein biosynthesis. May increase the efficiency of translation by recycling ribosomes from one round of translation to another. This chain is Ribosome-recycling factor, found in Streptococcus pyogenes serotype M28 (strain MGAS6180).